Here is a 407-residue protein sequence, read N- to C-terminus: Phosphoglycerate kinase (407 aa).

Substrate is bound by residues 21–23, Arg-36, 59–62, Arg-116, and Arg-156; these read DLN and HQGR. Residues Glu-332 and 358–361 contribute to the ATP site; that span reads GGDT.

It belongs to the phosphoglycerate kinase family. As to quaternary structure, monomer.

It is found in the cytoplasm. The catalysed reaction is (2R)-3-phosphoglycerate + ATP = (2R)-3-phospho-glyceroyl phosphate + ADP. The protein operates within carbohydrate degradation; glycolysis; pyruvate from D-glyceraldehyde 3-phosphate: step 2/5. This chain is Phosphoglycerate kinase, found in Halorubrum lacusprofundi (strain ATCC 49239 / DSM 5036 / JCM 8891 / ACAM 34).